A 230-amino-acid polypeptide reads, in one-letter code: Large ribosomal subunit protein uL1 (230 aa).

The protein belongs to the universal ribosomal protein uL1 family. As to quaternary structure, part of the 50S ribosomal subunit.

Binds directly to 23S rRNA. The L1 stalk is quite mobile in the ribosome, and is involved in E site tRNA release. Its function is as follows. Protein L1 is also a translational repressor protein, it controls the translation of the L11 operon by binding to its mRNA. In Bifidobacterium longum (strain DJO10A), this protein is Large ribosomal subunit protein uL1.